A 215-amino-acid chain; its full sequence is Probable phosphoglycerate mutase GpmB (215 aa).

Residues 8-15 (RHGETQWN), 21-22 (QG), Arg58, Lys60, 82-85 (ELDM), 104-105 (RR), and 151-152 (GI) each bind substrate. Catalysis depends on His9, which acts as the Tele-phosphohistidine intermediate. The Proton donor/acceptor role is filled by Glu82.

Belongs to the phosphoglycerate mutase family. GpmB subfamily.

The enzyme catalyses (2R)-2-phosphoglycerate = (2R)-3-phosphoglycerate. The protein operates within carbohydrate degradation; glycolysis; pyruvate from D-glyceraldehyde 3-phosphate: step 3/5. In Salmonella paratyphi C (strain RKS4594), this protein is Probable phosphoglycerate mutase GpmB.